The primary structure comprises 691 residues: Tumor necrosis factor alpha-induced protein 2 (691 aa).

Residues 9-111 (QGFPGQQSVP…KPRPELDGPL (103 aa)) are disordered. A compositionally biased stretch (polar residues) spans 12–31 (PGQQSVPGTLNFAVSPQKPR). Residues 33–45 (TSEAESETSMSEA) show a composition bias toward low complexity. Basic and acidic residues predominate over residues 91–107 (QPRLSDLEVQPKPRPEL).

The protein belongs to the SEC6 family.

In terms of biological role, may play a role as a mediator of inflammation and angiogenesis. This Mus musculus (Mouse) protein is Tumor necrosis factor alpha-induced protein 2 (Tnfaip2).